We begin with the raw amino-acid sequence, 921 residues long: Alanine--tRNA ligase (921 aa).

Zn(2+) contacts are provided by H602, H606, C706, and H710.

It belongs to the class-II aminoacyl-tRNA synthetase family. The cofactor is Zn(2+).

It localises to the cytoplasm. The catalysed reaction is tRNA(Ala) + L-alanine + ATP = L-alanyl-tRNA(Ala) + AMP + diphosphate. Its function is as follows. Catalyzes the attachment of alanine to tRNA(Ala) in a two-step reaction: alanine is first activated by ATP to form Ala-AMP and then transferred to the acceptor end of tRNA(Ala). Also edits incorrectly charged Ser-tRNA(Ala) and Gly-tRNA(Ala) via its editing domain. The chain is Alanine--tRNA ligase from Hyperthermus butylicus (strain DSM 5456 / JCM 9403 / PLM1-5).